Reading from the N-terminus, the 115-residue chain is Large ribosomal subunit protein uL18 (115 aa).

Residues 1 to 29 (MISKPDKNKLRQKRHTRVRGKISGTSETP) are disordered. Over residues 10-20 (LRQKRHTRVRG) the composition is skewed to basic residues.

Belongs to the universal ribosomal protein uL18 family. Part of the 50S ribosomal subunit; part of the 5S rRNA/L5/L18/L25 subcomplex. Contacts the 5S and 23S rRNAs.

Its function is as follows. This is one of the proteins that bind and probably mediate the attachment of the 5S RNA into the large ribosomal subunit, where it forms part of the central protuberance. This chain is Large ribosomal subunit protein uL18, found in Lactococcus lactis subsp. lactis (strain IL1403) (Streptococcus lactis).